The sequence spans 320 residues: Beta-ketoacyl-[acyl-carrier-protein] synthase III (320 aa).

Catalysis depends on residues cysteine 114 and histidine 247. The ACP-binding stretch occupies residues 248–252 (QANRR). Residue asparagine 277 is part of the active site.

Belongs to the thiolase-like superfamily. FabH family. In terms of assembly, homodimer.

The protein localises to the cytoplasm. It catalyses the reaction malonyl-[ACP] + acetyl-CoA + H(+) = 3-oxobutanoyl-[ACP] + CO2 + CoA. It participates in lipid metabolism; fatty acid biosynthesis. Functionally, catalyzes the condensation reaction of fatty acid synthesis by the addition to an acyl acceptor of two carbons from malonyl-ACP. Catalyzes the first condensation reaction which initiates fatty acid synthesis and may therefore play a role in governing the total rate of fatty acid production. Possesses both acetoacetyl-ACP synthase and acetyl transacylase activities. Its substrate specificity determines the biosynthesis of branched-chain and/or straight-chain of fatty acids. The sequence is that of Beta-ketoacyl-[acyl-carrier-protein] synthase III from Neisseria meningitidis serogroup A / serotype 4A (strain DSM 15465 / Z2491).